The primary structure comprises 376 residues: MAKRDYYEVLGVAKNASDDEIKKAYRKLAMKYHPDRNPDSKDAEEHFKEAKEAYEMLSDGQKRAAYDQYGHAGVDPNVGAAGAQGFGGFADAFGDIFGDIFGQAAGGGRARGGPQVYRGADLRYSMEITLEQAAHGYDTQIRVPSWAACGVCHGSGAKPGTKPETCPTCHGQGTVRMSQGFFSIQQTCPKCHGTGTYIPEPCVHCHGSGKVKETKTLEVKIPAGIDDGMRIRSAGNGEPGINGGPSGDLYVEIHIKPHAVFERDGDDLHCQMPIPFTTAALGGEIEVPTLAGRASFTVPEGTQSGKTFRLRGKGIKGLRSSIAGDLYVHVQVETPVKLTDQQRDLLKQFEKSLAEGGPRHSPQSKSWFDRVKSFFE.

Residues 5 to 70 form the J domain; the sequence is DYYEVLGVAK…QKRAAYDQYG (66 aa). The segment at 136–214 adopts a CR-type zinc-finger fold; it reads GYDTQIRVPS…CHGSGKVKET (79 aa). 8 residues coordinate Zn(2+): Cys149, Cys152, Cys166, Cys169, Cys188, Cys191, Cys202, and Cys205. 4 CXXCXGXG motif repeats span residues 149 to 156, 166 to 173, 188 to 195, and 202 to 209; these read CGVCHGSG, CPTCHGQG, CPKCHGTG, and CVHCHGSG.

This sequence belongs to the DnaJ family. As to quaternary structure, homodimer. Zn(2+) serves as cofactor.

The protein localises to the cytoplasm. Participates actively in the response to hyperosmotic and heat shock by preventing the aggregation of stress-denatured proteins and by disaggregating proteins, also in an autonomous, DnaK-independent fashion. Unfolded proteins bind initially to DnaJ; upon interaction with the DnaJ-bound protein, DnaK hydrolyzes its bound ATP, resulting in the formation of a stable complex. GrpE releases ADP from DnaK; ATP binding to DnaK triggers the release of the substrate protein, thus completing the reaction cycle. Several rounds of ATP-dependent interactions between DnaJ, DnaK and GrpE are required for fully efficient folding. Also involved, together with DnaK and GrpE, in the DNA replication of plasmids through activation of initiation proteins. The protein is Chaperone protein DnaJ of Burkholderia pseudomallei (strain 1710b).